A 667-amino-acid polypeptide reads, in one-letter code: Transketolase 2 (667 aa).

Substrate is bound at residue His25. Residues His65 and 113–115 (GPL) each bind thiamine diphosphate. Asp154 lines the Mg(2+) pocket. 2 residues coordinate thiamine diphosphate: Gly155 and Asn184. Residues Asn184 and Ile186 each coordinate Mg(2+). His260 provides a ligand contact to substrate. His260 lines the thiamine diphosphate pocket. Lys342 carries the post-translational modification N6-acetyllysine. The substrate site is built by Arg357 and Ser384. The active-site Proton donor is Glu410. Thiamine diphosphate is bound at residue Phe436. 3 residues coordinate substrate: His460, Asp468, and Arg519.

It belongs to the transketolase family. In terms of assembly, homodimer. Mg(2+) serves as cofactor. Requires Ca(2+) as cofactor. Mn(2+) is required as a cofactor. The cofactor is Co(2+). It depends on thiamine diphosphate as a cofactor.

It catalyses the reaction D-sedoheptulose 7-phosphate + D-glyceraldehyde 3-phosphate = aldehydo-D-ribose 5-phosphate + D-xylulose 5-phosphate. Functionally, catalyzes the reversible transfer of a two-carbon ketol group from sedoheptulose-7-phosphate to glyceraldehyde-3-phosphate, producing xylulose-5-phosphate and ribose-5-phosphate. Catalyzes the transfer of a two-carbon ketol group from a ketose donor to an aldose acceptor, via a covalent intermediate with the cofactor thiamine pyrophosphate. In Escherichia coli (strain K12), this protein is Transketolase 2.